Reading from the N-terminus, the 124-residue chain is Large ribosomal subunit protein bL20 (124 aa).

Belongs to the bacterial ribosomal protein bL20 family.

In terms of biological role, binds directly to 23S ribosomal RNA and is necessary for the in vitro assembly process of the 50S ribosomal subunit. It is not involved in the protein synthesizing functions of that subunit. This chain is Large ribosomal subunit protein bL20, found in Gemmatimonas aurantiaca (strain DSM 14586 / JCM 11422 / NBRC 100505 / T-27).